The sequence spans 225 residues: MVMETESKFHVLAVDDSLFDRKMIERLLQKSSCQVTTVDSGSKALEFLGLRVDDNDPNALSTSPQIHQEVEINLIITDYCMPGMTGYDLLKKVKESAAFRSIPVVIMSSENVPARISRCLEEGAEEFFLKPVKLADLTKLKPHMMKTKLKKESEKPVAIEEIVVSKPEIEEEEEESSVIEILPLHQEIESEQLEPMLSSNKRKAMEEVVSTDRSRPKYNDITTSV.

The region spanning 10–145 is the Response regulatory domain; that stretch reads HVLAVDDSLF…DLTKLKPHMM (136 aa). A 4-aspartylphosphate modification is found at D78.

The protein belongs to the ARR family. Type-A subfamily. Post-translationally, two-component system major event consists of a His-to-Asp phosphorelay between a sensor histidine kinase (HK) and a response regulator (RR). In plants, the His-to-Asp phosphorelay involves an additional intermediate named Histidine-containing phosphotransfer protein (HPt). This multistep phosphorelay consists of a His-Asp-His-Asp sequential transfer of a phosphate group between first a His and an Asp of the HK protein, followed by the transfer to a conserved His of the HPt protein and finally the transfer to an Asp in the receiver domain of the RR protein. As to expression, predominantly expressed in roots.

It is found in the nucleus. Functionally, functions as a response regulator involved in His-to-Asp phosphorelay signal transduction system. Phosphorylation of the Asp residue in the receiver domain activates the ability of the protein to promote the transcription of target genes. Type-A response regulators seem to act as negative regulators of the cytokinin signaling. The sequence is that of Two-component response regulator ARR8 (ARR8) from Arabidopsis thaliana (Mouse-ear cress).